The sequence spans 142 residues: 3-hydroxyacyl-[acyl-carrier-protein] dehydratase FabZ (142 aa).

The active site involves His-50.

Belongs to the thioester dehydratase family. FabZ subfamily.

It localises to the cytoplasm. The enzyme catalyses a (3R)-hydroxyacyl-[ACP] = a (2E)-enoyl-[ACP] + H2O. Its function is as follows. Involved in unsaturated fatty acids biosynthesis. Catalyzes the dehydration of short chain beta-hydroxyacyl-ACPs and long chain saturated and unsaturated beta-hydroxyacyl-ACPs. In Clostridium tetani (strain Massachusetts / E88), this protein is 3-hydroxyacyl-[acyl-carrier-protein] dehydratase FabZ.